Here is a 95-residue protein sequence, read N- to C-terminus: MADEKPKEGVKTENNDHINLKVAGQDGSVVQFKIKRHTPLSKLMKAYCERQGLSMRQIRFRFDGQPINETDTPAQLEMEDEDTIDVFQQQTGGVY.

M1 participates in a covalent cross-link: Peptide (Met-Gly) (interchain with G-Cter in ubiquitin). Glycyl lysine isopeptide (Lys-Gly) (interchain with G-Cter in SUMO2) cross-links involve residues K5 and K7. K11 bears the N6-acetyllysine; alternate mark. Residue K11 forms a Glycyl lysine isopeptide (Lys-Gly) (interchain with G-Cter in SUMO); alternate linkage. A Glycyl lysine isopeptide (Lys-Gly) (interchain with G-Cter in SUMO1); alternate cross-link involves residue K11. K11 is covalently cross-linked (Glycyl lysine isopeptide (Lys-Gly) (interchain with G-Cter in SUMO2); alternate). K11 is covalently cross-linked (Glycyl lysine isopeptide (Lys-Gly) (interchain with G-Cter in ubiquitin); alternate). In terms of domain architecture, Ubiquitin-like spans 16-95 (DHINLKVAGQ…VFQQQTGGVY (80 aa)). K21 participates in a covalent cross-link: Glycyl lysine isopeptide (Lys-Gly) (interchain with G-Cter in SUMO2). Residue G93 forms a Glycyl lysine isopeptide (Gly-Lys) (interchain with K-? in acceptor proteins) linkage. Residues 94 to 95 (VY) constitute a propeptide that is removed on maturation.

Belongs to the ubiquitin family. SUMO subfamily. As to quaternary structure, interacts with SAE2 and UBE2I. Interacts with ZNF451. Identified in a complex with ZNF451 and UBE2I/UBC9, where one ZNF451 interacts with one UBE2I/UBC9 and two SUMO2 chains, one bound to the UBE2I/UBC9 active site and the other to another region of the same UBE2I/UBC9 molecule. Covalently attached to a number of proteins. Interacts with PELP1. Interacts with USP25; the interaction sumoylates USP25. Interacts with SIMC1, CASP8AP2, RNF111 and SOBP (via SIM domains). Interacts with MTA1. Interacts with HINT1. Interacts with GCNA (via SIM domains); this interaction allows the GCNA recruitment to DPCs sites. Post-translationally, polymeric chains can be formed through Lys-11 cross-linking. Polymeric SUMO2 chains undergo 'Lys-6'-, 'Lys-11'-, 'Lys-48'- and 'Lys-63'-linked polyubiquitination by RNF4. Cleavage of precursor form by SENP1 or SENP2 is necessary for function. In terms of processing, monoubiquitinated N-terminally by UBE2W, which primes it for RNF4-dependent polyubiquitination by the UBE2V1-UBE2N heterodimer.

The protein resides in the nucleus. The protein localises to the PML body. Functionally, ubiquitin-like protein that can be covalently attached to proteins as a monomer or as a lysine-linked polymer. Covalent attachment via an isopeptide bond to its substrates requires prior activation by the E1 complex SAE1-SAE2 and linkage to the E2 enzyme UBE2I, and can be promoted by an E3 ligase such as PIAS1-4, RANBP2 or CBX4. This post-translational modification on lysine residues of proteins plays a crucial role in a number of cellular processes such as nuclear transport, DNA replication and repair, mitosis and signal transduction. Polymeric SUMO2 chains are also susceptible to polyubiquitination which functions as a signal for proteasomal degradation of modified proteins. Plays a role in the regulation of sumoylation status of SETX. The polypeptide is Small ubiquitin-related modifier 2 (Bos taurus (Bovine)).